A 99-amino-acid polypeptide reads, in one-letter code: MRLLLILVLLTPVIVAFSVDEELNNADGANAASFTADQEVRHKRNLFPAIARRGLDVELKSDGCPKYCPPGISCCFGDNCATSATSGKMECLKNPRQFV.

An N-terminal signal peptide occupies residues 1–21 (MRLLLILVLLTPVIVAFSVDE). Positions 22 to 53 (ELNNADGANAASFTADQEVRHKRNLFPAIARR) are excised as a propeptide.

Post-translationally, contains 3 disulfide bonds. Expressed by the venom duct.

It is found in the secreted. The polypeptide is Teretoxin Tsu6.4 (Terebra subulata (Chocolate spotted auger)).